We begin with the raw amino-acid sequence, 413 residues long: Tyrosine--tRNA ligase (413 aa).

The short motif at 59–68 is the 'HIGH' region element; sequence PTAPDIHLGH. A 'KMSKS' region motif is present at residues 243–247; it reads KMSKS. K246 contributes to the ATP binding site. Residues 351–411 form the S4 RNA-binding domain; it reads LAIGQLLKQA…GKRRFARVTL (61 aa).

It belongs to the class-I aminoacyl-tRNA synthetase family. TyrS type 2 subfamily. In terms of assembly, homodimer.

The protein localises to the cytoplasm. The enzyme catalyses tRNA(Tyr) + L-tyrosine + ATP = L-tyrosyl-tRNA(Tyr) + AMP + diphosphate + H(+). In terms of biological role, catalyzes the attachment of tyrosine to tRNA(Tyr) in a two-step reaction: tyrosine is first activated by ATP to form Tyr-AMP and then transferred to the acceptor end of tRNA(Tyr). This chain is Tyrosine--tRNA ligase, found in Burkholderia pseudomallei (strain K96243).